Here is a 625-residue protein sequence, read N- to C-terminus: Chromatin structure-remodeling complex subunit RSC4 (625 aa).

Positions methionine 1–histidine 35 are disordered. 2 Bromo domains span residues tryptophan 53–alanine 158 and lysine 181–glutamate 292. A phosphoserine mark is found at serine 199 and serine 545. A compositionally biased stretch (polar residues) spans arginine 536–asparagine 552. A disordered region spans residues arginine 536–isoleucine 555.

As to quaternary structure, component of the two forms of the RSC complex composed of at least either RSC1 or RSC2, and ARP7, ARP9, LDB7, NPL6, RSC3, RSC30, RSC4, RSC58, RSC6, RSC8, RSC9, SFH1, STH1, HTL1 and probably RTT102. The complexes interact with histone and histone variant components of centromeric chromatin.

It localises to the nucleus. In terms of biological role, component of the chromatin structure remodeling complex (RSC), which is involved in transcription regulation and nucleosome positioning. RSC is responsible for the transfer of a histone octamer from a nucleosome core particle to naked DNA. The reaction requires ATP and involves an activated RSC-nucleosome intermediate. Remodeling reaction also involves DNA translocation, DNA twist and conformational change. As a reconfigurer of centromeric and flanking nucleosomes, RSC complex is required both for proper kinetochore function in chromosome segregation and, via a PKC1-dependent signaling pathway, for organization of the cellular cytoskeleton. This is Chromatin structure-remodeling complex subunit RSC4 (RSC4) from Saccharomyces cerevisiae (strain ATCC 204508 / S288c) (Baker's yeast).